Reading from the N-terminus, the 295-residue chain is MQIIDGKKISQDLKNELKTDVAHFQASIGKVPGLTVIIVGHDPASQVYVRNKAKSCLEIGMHSTVIEMPHDTPQETLLQAIRELNQDPAVHGILVQQPLPKQIDEFAVTLAIDPSKDVDGFHPENLGRLVMGHLDKCFVSCTPYGILELLDRYNIETKGKHCVVVGRSNIVGKPMANLMMQKLDATNCTVTVCHSATRDIPSFTKQADILIAALGKARFITADMVKPGAVVIDVGINRIEDPSTKSGYRLVGDVDYDGVAALASAITPVPGGVGPMTIAMLLKNTLQSFRRINNL.

Residues 166 to 168 (GRS), Ser195, and Ile236 each bind NADP(+).

This sequence belongs to the tetrahydrofolate dehydrogenase/cyclohydrolase family. As to quaternary structure, homodimer.

It catalyses the reaction (6R)-5,10-methylene-5,6,7,8-tetrahydrofolate + NADP(+) = (6R)-5,10-methenyltetrahydrofolate + NADPH. It carries out the reaction (6R)-5,10-methenyltetrahydrofolate + H2O = (6R)-10-formyltetrahydrofolate + H(+). It functions in the pathway one-carbon metabolism; tetrahydrofolate interconversion. In terms of biological role, catalyzes the oxidation of 5,10-methylenetetrahydrofolate to 5,10-methenyltetrahydrofolate and then the hydrolysis of 5,10-methenyltetrahydrofolate to 10-formyltetrahydrofolate. This chain is Bifunctional protein FolD, found in Chlorobium phaeobacteroides (strain DSM 266 / SMG 266 / 2430).